The sequence spans 1085 residues: Solute carrier family 12 member 4 (1085 aa).

Over 1-119 (MPHFTVVPVD…RRAAKAPSMG (119 aa)) the chain is Cytoplasmic. Phosphoserine is present on residues serine 24, serine 47, serine 51, serine 81, and serine 88. The disordered stretch occupies residues 32–56 (AEREDSDGQGNHRENSPFLSPLDAS). Residues 120–141 (TLMGVYLPCLQNIFGVILFLRL) form a discontinuously helical membrane-spanning segment. Positions 131 and 132 each coordinate K(+). The Extracellular portion of the chain corresponds to 142–149 (TWMVGTAG). A helical transmembrane segment spans residues 150-172 (VLQALLIVLICCCCTLLTAISMS). The Cytoplasmic portion of the chain corresponds to 173–196 (AIATNGVVPAGGSYFMISRSLGPE). Residues 197 to 225 (FGGAVGLCFYLGTTFAAAMYILGAIEILL) form a helical membrane-spanning segment. Tyrosine 216 lines the K(+) pocket. Topologically, residues 226-248 (TYIAPPAAIFYPSGTHDMSSATL) are extracellular. Helical transmembrane passes span 249–271 (NNMR…VGVK) and 272–297 (YVNK…GGIK). The Extracellular segment spans residues 298-419 (SAFDPPVFPV…LYVVADIATS (122 aa)). A disulfide bridge links cysteine 308 with cysteine 323. 3 N-linked (GlcNAc...) asparagine glycosylation sites follow: asparagine 312, asparagine 331, and asparagine 347. Residues cysteine 343 and cysteine 353 are joined by a disulfide bond. The helical transmembrane segment at 420 to 440 (FTVLVGIFFPSVTGIMAGSNR) threads the bilayer. Proline 429 and threonine 432 together coordinate K(+). Positions 433, 434, and 435 each coordinate chloride. Topologically, residues 441–450 (SGDLRDAQKS) are cytoplasmic. The chain crosses the membrane as a helical span at residues 451 to 473 (IPVGTILAIVTTSLVYFSSVILF). At 474 to 504 (GACIEGVVLRDKYGDGVSRNLVVGTLAWPSP) the chain is on the extracellular side. Residues 505-531 (WVIVVGSFFSTCGAGLQSLTGAPRLLQ) form a helical membrane-spanning segment. At 532–554 (AIAKDNIIPFLRVFGHGKANGEP) the chain is on the cytoplasmic side. The next 2 membrane-spanning stretches (helical) occupy residues 555–575 (TWAL…ASLD) and 576–598 (MVAP…ACAV). Tyrosine 589 is a binding site for chloride. Over 599 to 612 (QTLLRTPNWRPRFK) the chain is Cytoplasmic. 2 consecutive transmembrane segments (helical) span residues 613-635 (YYHW…VSSW) and 636-651 (YYAL…IYKY). Residues 652 to 1085 (IEYQGAEKEW…GGREVITIYS (434 aa)) are Cytoplasmic-facing. Residues 665–681 (IRGLSLSAARYALLRLE) form a scissor helix region. Leucine 697, lysine 699, lysine 707, tyrosine 708, and valine 730 together coordinate ATP. Position 734 is a phosphoserine (serine 734). Glycine 794, tryptophan 795, and tyrosine 797 together coordinate ATP. Residues serine 916 and serine 967 each carry the phosphoserine modification. Threonine 983 carries the phosphothreonine modification. A Phosphoserine modification is found at serine 1050.

This sequence belongs to the SLC12A transporter family. K/Cl co-transporter subfamily. As to quaternary structure, homodimer; adopts a domain-swap conformation at the scissor helices connecting the transmembrane domain and C-terminal domain. Heterodimer with other K-Cl cotransporters. Post-translationally, N-glycosylated. Phosphorylated, phosphorylation may regulate transporter activity. As to expression, ubiquitous.

Its subcellular location is the cell membrane. It catalyses the reaction K(+)(in) + chloride(in) = K(+)(out) + chloride(out). With respect to regulation, inhibited by WNK3. Mediates electroneutral potassium-chloride cotransport when activated by cell swelling. May contribute to cell volume homeostasis in single cells. May be involved in the regulation of basolateral Cl(-) exit in NaCl absorbing epithelia. This Rattus norvegicus (Rat) protein is Solute carrier family 12 member 4 (Slc12a4).